The primary structure comprises 211 residues: Protein YCF54, chloroplastic (211 aa).

A chloroplast-targeting transit peptide spans 1–80 (MWSVTGALTV…GESTKYHFLV (80 aa)).

Belongs to the ycf54 family. In terms of assembly, interacts with LFNR1 and CRD1/CHL27 in chloroplasts.

It is found in the plastid. Its subcellular location is the chloroplast. Involved in the biosynthesis of chlorophyll; acts probably as a scaffolding factor in the MgProto monomethylester (MgProtoME) cyclase complex to stabilize CRD1/CHL27, the catalytic subunit which catalyzes the formation of a fifth isocyclic ring to tetrapyrroles to form protochlorophyllide. The sequence is that of Protein YCF54, chloroplastic from Arabidopsis thaliana (Mouse-ear cress).